The sequence spans 278 residues: 4-deoxy-L-threo-5-hexosulose-uronate ketol-isomerase (278 aa).

His-196, His-198, Glu-203, and His-245 together coordinate Zn(2+).

It belongs to the KduI family. Zn(2+) is required as a cofactor.

It carries out the reaction 5-dehydro-4-deoxy-D-glucuronate = 3-deoxy-D-glycero-2,5-hexodiulosonate. It participates in glycan metabolism; pectin degradation; 2-dehydro-3-deoxy-D-gluconate from pectin: step 4/5. Its function is as follows. Catalyzes the isomerization of 5-dehydro-4-deoxy-D-glucuronate to 3-deoxy-D-glycero-2,5-hexodiulosonate. In Yersinia enterocolitica serotype O:8 / biotype 1B (strain NCTC 13174 / 8081), this protein is 4-deoxy-L-threo-5-hexosulose-uronate ketol-isomerase.